We begin with the raw amino-acid sequence, 161 residues long: Nucleotide-binding protein PputGB1_4497 (161 aa).

It belongs to the YajQ family.

In terms of biological role, nucleotide-binding protein. In Pseudomonas putida (strain GB-1), this protein is Nucleotide-binding protein PputGB1_4497.